A 154-amino-acid chain; its full sequence is MGLSDGEWQSVLNVWGKVEADLAGHGQEILIRLFTAHPETLEKFDKFKNLKTPDEMKASEDLKKHGVTVLTALGGILKKKGQHEAEIKPLAQSHATKHKIPVKYLEFISGAIIHVLQSKHPGDFGADAQGAMSKALELFRNDIAAKYKELGFQG.

A Globin domain is found at 2–148 (GLSDGEWQSV…FRNDIAAKYK (147 aa)). At Ser-4 the chain carries Phosphoserine. His-65 provides a ligand contact to nitrite. Position 65 (His-65) interacts with O2. Thr-68 carries the phosphothreonine modification. His-94 provides a ligand contact to heme b.

The protein belongs to the globin family. Monomeric.

Its subcellular location is the cytoplasm. The protein resides in the sarcoplasm. It catalyses the reaction Fe(III)-heme b-[protein] + nitric oxide + H2O = Fe(II)-heme b-[protein] + nitrite + 2 H(+). The catalysed reaction is H2O2 + AH2 = A + 2 H2O. Its function is as follows. Monomeric heme protein which primary function is to store oxygen and facilitate its diffusion within muscle tissues. Reversibly binds oxygen through a pentacoordinated heme iron and enables its timely and efficient release as needed during periods of heightened demand. Depending on the oxidative conditions of tissues and cells, and in addition to its ability to bind oxygen, it also has a nitrite reductase activity whereby it regulates the production of bioactive nitric oxide. Under stress conditions, like hypoxia and anoxia, it also protects cells against reactive oxygen species thanks to its pseudoperoxidase activity. The sequence is that of Myoglobin (MB) from Nycticebus coucang (Slow loris).